We begin with the raw amino-acid sequence, 216 residues long: Pyrophosphatase PpaX (216 aa).

The active-site Nucleophile is D9.

The protein belongs to the HAD-like hydrolase superfamily. PpaX family. Mg(2+) serves as cofactor.

The catalysed reaction is diphosphate + H2O = 2 phosphate + H(+). Functionally, hydrolyzes pyrophosphate formed during P-Ser-HPr dephosphorylation by HPrK/P. Might play a role in controlling the intracellular pyrophosphate pool. This chain is Pyrophosphatase PpaX, found in Bacillus anthracis (strain CDC 684 / NRRL 3495).